The following is a 398-amino-acid chain: Carbamoyl phosphate synthase small chain (398 aa).

CPSase regions lie at residues 1-205 (MTQT…TNDA) and 1-207 (MTQT…DACN). Serine 60, glycine 257, and glycine 259 together coordinate L-glutamine. The Glutamine amidotransferase type-1 domain occupies 209 to 397 (HIVAIDYGIK…FNLIMDYKRT (189 aa)). Cysteine 286 acts as the Nucleophile in catalysis. Residues leucine 287, glutamine 290, asparagine 328, glycine 330, and phenylalanine 331 each contribute to the L-glutamine site. Catalysis depends on residues histidine 370 and glutamate 372.

It belongs to the CarA family. As to quaternary structure, composed of two chains; the small (or glutamine) chain promotes the hydrolysis of glutamine to ammonia, which is used by the large (or ammonia) chain to synthesize carbamoyl phosphate. Tetramer of heterodimers (alpha,beta)4.

The enzyme catalyses hydrogencarbonate + L-glutamine + 2 ATP + H2O = carbamoyl phosphate + L-glutamate + 2 ADP + phosphate + 2 H(+). It carries out the reaction L-glutamine + H2O = L-glutamate + NH4(+). Its pathway is amino-acid biosynthesis; L-arginine biosynthesis; carbamoyl phosphate from bicarbonate: step 1/1. It functions in the pathway pyrimidine metabolism; UMP biosynthesis via de novo pathway; (S)-dihydroorotate from bicarbonate: step 1/3. Small subunit of the glutamine-dependent carbamoyl phosphate synthetase (CPSase). CPSase catalyzes the formation of carbamoyl phosphate from the ammonia moiety of glutamine, carbonate, and phosphate donated by ATP, constituting the first step of 2 biosynthetic pathways, one leading to arginine and/or urea and the other to pyrimidine nucleotides. The small subunit (glutamine amidotransferase) binds and cleaves glutamine to supply the large subunit with the substrate ammonia. This chain is Carbamoyl phosphate synthase small chain, found in Bartonella quintana (strain Toulouse) (Rochalimaea quintana).